Reading from the N-terminus, the 735-residue chain is Photosystem I P700 chlorophyll a apoprotein A2 (735 aa).

8 helical membrane passes run 46 to 69, 135 to 158, 175 to 199, 273 to 291, 333 to 356, 372 to 398, 420 to 442, and 518 to 536; these read LFST…FHIA, LYQG…LHLQ, LNHH…HVAI, IAHH…GHMY, LHFQ…QHMY, AALY…IFFI, AIIS…LYVH, and FLVH…LILV. Positions 560 and 569 each coordinate [4Fe-4S] cluster. A run of 2 helical transmembrane segments spans residues 576-597 and 644-666; these read AFYL…YWHW and LAVW…MFLI. Chlorophyll a-binding residues include H655, M663, and Y671. W672 contacts phylloquinone. Residues 708–728 form a helical membrane-spanning segment; sequence VVGLAHFSVGYVLTYAAFLIA.

It belongs to the PsaA/PsaB family. The PsaA/B heterodimer binds the P700 chlorophyll special pair and subsequent electron acceptors. PSI consists of a core antenna complex that captures photons, and an electron transfer chain that converts photonic excitation into a charge separation. The cyanobacterial PSI reaction center is composed of one copy each of PsaA,B,C,D,E,F,I,J,K,L,M and X, and forms trimeric complexes. It depends on PSI electron transfer chain: 5 chlorophyll a, 1 chlorophyll a', 2 phylloquinones and 3 4Fe-4S clusters. PSI core antenna: 90 chlorophyll a, 22 carotenoids, 3 phospholipids and 1 galactolipid. P700 is a chlorophyll a/chlorophyll a' dimer, A0 is one or more chlorophyll a, A1 is one or both phylloquinones and FX is a shared 4Fe-4S iron-sulfur center. as a cofactor.

Its subcellular location is the cellular thylakoid membrane. The enzyme catalyses reduced [plastocyanin] + hnu + oxidized [2Fe-2S]-[ferredoxin] = oxidized [plastocyanin] + reduced [2Fe-2S]-[ferredoxin]. In terms of biological role, psaA and PsaB bind P700, the primary electron donor of photosystem I (PSI), as well as the electron acceptors A0, A1 and FX. PSI is a plastocyanin/cytochrome c6-ferredoxin oxidoreductase, converting photonic excitation into a charge separation, which transfers an electron from the donor P700 chlorophyll pair to the spectroscopically characterized acceptors A0, A1, FX, FA and FB in turn. Oxidized P700 is reduced on the lumenal side of the thylakoid membrane by plastocyanin or cytochrome c6. The protein is Photosystem I P700 chlorophyll a apoprotein A2 of Synechococcus sp. (strain CC9902).